Here is a 582-residue protein sequence, read N- to C-terminus: 2-succinyl-5-enolpyruvyl-6-hydroxy-3-cyclohexene-1-carboxylate synthase (582 aa).

The protein belongs to the TPP enzyme family. MenD subfamily. Homodimer. The cofactor is Mg(2+). It depends on Mn(2+) as a cofactor. Thiamine diphosphate is required as a cofactor.

It catalyses the reaction isochorismate + 2-oxoglutarate + H(+) = 5-enolpyruvoyl-6-hydroxy-2-succinyl-cyclohex-3-ene-1-carboxylate + CO2. The protein operates within quinol/quinone metabolism; 1,4-dihydroxy-2-naphthoate biosynthesis; 1,4-dihydroxy-2-naphthoate from chorismate: step 2/7. Its pathway is cofactor biosynthesis; phylloquinone biosynthesis. Functionally, catalyzes the thiamine diphosphate-dependent decarboxylation of 2-oxoglutarate and the subsequent addition of the resulting succinic semialdehyde-thiamine pyrophosphate anion to isochorismate to yield 2-succinyl-5-enolpyruvyl-6-hydroxy-3-cyclohexene-1-carboxylate (SEPHCHC). This chain is 2-succinyl-5-enolpyruvyl-6-hydroxy-3-cyclohexene-1-carboxylate synthase, found in Prochlorococcus marinus (strain MIT 9313).